We begin with the raw amino-acid sequence, 239 residues long: Uridylate kinase (239 aa).

12 to 15 (KLSG) contributes to the ATP binding site. G54 serves as a coordination point for UMP. The ATP site is built by G55 and R59. UMP-binding positions include D74 and 135–142 (TGNPYFTT). Positions 162, 168, and 171 each coordinate ATP.

This sequence belongs to the UMP kinase family. As to quaternary structure, homohexamer.

The protein resides in the cytoplasm. The enzyme catalyses UMP + ATP = UDP + ADP. Its pathway is pyrimidine metabolism; CTP biosynthesis via de novo pathway; UDP from UMP (UMPK route): step 1/1. Its activity is regulated as follows. Inhibited by UTP. Its function is as follows. Catalyzes the reversible phosphorylation of UMP to UDP. The polypeptide is Uridylate kinase (Fusobacterium nucleatum subsp. nucleatum (strain ATCC 25586 / DSM 15643 / BCRC 10681 / CIP 101130 / JCM 8532 / KCTC 2640 / LMG 13131 / VPI 4355)).